The chain runs to 306 residues: Methionyl-tRNA formyltransferase (306 aa).

108–111 (SLLP) contacts (6S)-5,6,7,8-tetrahydrofolate.

The protein belongs to the Fmt family.

The catalysed reaction is L-methionyl-tRNA(fMet) + (6R)-10-formyltetrahydrofolate = N-formyl-L-methionyl-tRNA(fMet) + (6S)-5,6,7,8-tetrahydrofolate + H(+). In terms of biological role, attaches a formyl group to the free amino group of methionyl-tRNA(fMet). The formyl group appears to play a dual role in the initiator identity of N-formylmethionyl-tRNA by promoting its recognition by IF2 and preventing the misappropriation of this tRNA by the elongation apparatus. The sequence is that of Methionyl-tRNA formyltransferase from Paenarthrobacter aurescens (strain TC1).